A 1122-amino-acid chain; its full sequence is Histone deacetylase 5 (1122 aa).

The disordered stretch occupies residues 1–24 (MNSPNESDGMSGREPSLEILPRTS). Residue Lys35 forms a Glycyl lysine isopeptide (Lys-Gly) (interchain with G-Cter in SUMO2) linkage. Disordered regions lie at residues 41 to 60 (AMPS…VELR) and 196 to 281 (KEPT…SSPL). Residues 247–258 (DSRDDFPLRKTA) show a composition bias toward basic and acidic residues. Ser259 is subject to Phosphoserine; by AMPK, CaMK1, SIK1 and PKD/PRKD1. A compositionally biased stretch (basic and acidic residues) spans 272 to 281 (KVAERRSSPL). A Phosphothreonine; by PKC modification is found at Thr292. Disordered stretches follow at residues 302–343 (GAGP…NIPT) and 481–504 (MRTV…LPQS). The span at 312–327 (NSAPGSGPSSPNSSHS) shows a compositional bias: low complexity. The span at 328 to 340 (TIAENGFTGSVPN) shows a compositional bias: polar residues. Low complexity predominate over residues 494–504 (SRTQSSPLPQS). Residue Ser498 is modified to Phosphoserine; by AMPK, CaMK1, SIK1 and PKD/PRKD1. An N6-acetyllysine modification is found at Lys533. Residues 536–625 (TKTGELPRQP…GPDLEEPGAG (90 aa)) form a disordered region. Residues 581–621 (STQEDLEEEDEEDDGEEEEDCIQVKDEEGESGAEEGPDLEE) are compositionally biased toward acidic residues. Ser611 and Ser661 each carry phosphoserine. The tract at residues 684–1028 (GVVYDTFMLK…VSALLSVELQ (345 aa)) is histone deacetylase. 4 residues coordinate Zn(2+): Cys696, Cys698, His704, and Cys781. His833 is an active-site residue. A Nuclear export signal motif is present at residues 1081-1122 (EEAETVSAMALLSVGAEQAQAAAAREHSPRPAEEPMEQEPAL). Residues 1097 to 1122 (EQAQAAAAREHSPRPAEEPMEQEPAL) are disordered. Residues 1104 to 1113 (AREHSPRPAE) are compositionally biased toward basic and acidic residues. The residue at position 1108 (Ser1108) is a Phosphoserine.

This sequence belongs to the histone deacetylase family. HD type 2 subfamily. In terms of assembly, interacts with AHRR, BAHD1, BCOR, HDAC7, HDAC9, CTBP1, MEF2C, NCOR2, NRIP1, PHB2 and a 14-3-3 chaperone protein. Interacts with BCL6, DDIT3/CHOP, GRK5, KDM5B and MYOCD. Interacts with EP300 in the presence of TFAP2C. Interacts with ANKRA2. Interacts with CUL7 (as part of the 3M complex); negatively regulated by ANKRA2. Interacts with ZBTB7B; the interaction allows the recruitment of HDAC4 on CD8 loci for deacetylation and possible inhibition of CD8 genes expression. Interacts with RARA. In terms of processing, phosphorylated by AMPK, CaMK1, SIK1 and PRKD1 at Ser-259 and Ser-498. The phosphorylation is required for the export to the cytoplasm and inhibition. Phosphorylated by the PKC kinases PKN1 and PKN2, impairing nuclear import. Phosphorylated by GRK5, leading to nuclear export of HDAC5 and allowing MEF2-mediated transcription. Post-translationally, ubiquitinated. Polyubiquitination however does not lead to its degradation. As to expression, ubiquitous.

It is found in the nucleus. It localises to the cytoplasm. The catalysed reaction is N(6)-acetyl-L-lysyl-[histone] + H2O = L-lysyl-[histone] + acetate. In terms of biological role, responsible for the deacetylation of lysine residues on the N-terminal part of the core histones (H2A, H2B, H3 and H4). Histone deacetylation gives a tag for epigenetic repression and plays an important role in transcriptional regulation, cell cycle progression and developmental events. Histone deacetylases act via the formation of large multiprotein complexes. Involved in muscle maturation by repressing transcription of myocyte enhancer MEF2C. During muscle differentiation, it shuttles into the cytoplasm, allowing the expression of myocyte enhancer factors. Involved in the MTA1-mediated epigenetic regulation of ESR1 expression in breast cancer. Serves as a corepressor of RARA and causes its deacetylation. In association with RARA, plays a role in the repression of microRNA-10a and thereby in the inflammatory response. In Homo sapiens (Human), this protein is Histone deacetylase 5 (HDAC5).